Consider the following 183-residue polypeptide: Large ribosomal subunit protein uL6 (183 aa).

The protein belongs to the universal ribosomal protein uL6 family. In terms of assembly, part of the 50S ribosomal subunit.

This protein binds to the 23S rRNA, and is important in its secondary structure. It is located near the subunit interface in the base of the L7/L12 stalk, and near the tRNA binding site of the peptidyltransferase center. The chain is Large ribosomal subunit protein uL6 from Parabacteroides distasonis (strain ATCC 8503 / DSM 20701 / CIP 104284 / JCM 5825 / NCTC 11152).